We begin with the raw amino-acid sequence, 1260 residues long: uncharacterized protein (1260 aa).

It localises to the plastid. Its subcellular location is the chloroplast. This is an uncharacterized protein from Ostreococcus tauri.